Reading from the N-terminus, the 138-residue chain is Holo-[acyl-carrier-protein] synthase (138 aa).

Mg(2+)-binding residues include Asp8 and Glu56.

Belongs to the P-Pant transferase superfamily. AcpS family. Requires Mg(2+) as cofactor.

It localises to the cytoplasm. It carries out the reaction apo-[ACP] + CoA = holo-[ACP] + adenosine 3',5'-bisphosphate + H(+). In terms of biological role, transfers the 4'-phosphopantetheine moiety from coenzyme A to a Ser of acyl-carrier-protein. The polypeptide is Holo-[acyl-carrier-protein] synthase (Thermoanaerobacter pseudethanolicus (strain ATCC 33223 / 39E) (Clostridium thermohydrosulfuricum)).